The following is a 99-amino-acid chain: Putative septation protein SpoVG (99 aa).

It belongs to the SpoVG family.

Its function is as follows. Could be involved in septation. The sequence is that of Putative septation protein SpoVG from Onion yellows phytoplasma (strain OY-M).